Reading from the N-terminus, the 810-residue chain is Phenylalanine--tRNA ligase beta subunit (810 aa).

Residues 39 to 154 (APPTEKIVVG…EGTPVGQDIR (116 aa)) enclose the tRNA-binding domain. One can recognise a B5 domain in the interval 405–480 (PQRAPVSMRA…RIYGFEKIPA (76 aa)). Residues Asp458, Asp464, Glu467, and Glu468 each contribute to the Mg(2+) site. Positions 707 to 809 (SKFPPVRRDI…MARVYGARLR (103 aa)) constitute an FDX-ACB domain.

It belongs to the phenylalanyl-tRNA synthetase beta subunit family. Type 1 subfamily. In terms of assembly, tetramer of two alpha and two beta subunits. Mg(2+) is required as a cofactor.

The protein localises to the cytoplasm. The catalysed reaction is tRNA(Phe) + L-phenylalanine + ATP = L-phenylalanyl-tRNA(Phe) + AMP + diphosphate + H(+). This chain is Phenylalanine--tRNA ligase beta subunit, found in Burkholderia pseudomallei (strain 1710b).